The chain runs to 355 residues: S-adenosylmethionine:tRNA ribosyltransferase-isomerase (355 aa).

This sequence belongs to the QueA family. Monomer.

It is found in the cytoplasm. It catalyses the reaction 7-aminomethyl-7-carbaguanosine(34) in tRNA + S-adenosyl-L-methionine = epoxyqueuosine(34) in tRNA + adenine + L-methionine + 2 H(+). It participates in tRNA modification; tRNA-queuosine biosynthesis. Transfers and isomerizes the ribose moiety from AdoMet to the 7-aminomethyl group of 7-deazaguanine (preQ1-tRNA) to give epoxyqueuosine (oQ-tRNA). The chain is S-adenosylmethionine:tRNA ribosyltransferase-isomerase from Burkholderia lata (strain ATCC 17760 / DSM 23089 / LMG 22485 / NCIMB 9086 / R18194 / 383).